Reading from the N-terminus, the 426-residue chain is Zinc finger CCCH domain-containing protein 15 (426 aa).

Low complexity predominate over residues 1 to 12 (MPPKKQAQAGGS). 2 disordered regions span residues 1–30 (MPPK…KTFG) and 53–74 (GQQN…KDDK). The span at 13-29 (KKAEQKKKEKIIEDKTF) shows a compositional bias: basic and acidic residues. A compositionally biased stretch (polar residues) spans 53–62 (GQQNPRQVAQ). Residues 61 to 86 (AQSEAEKKLKKDDKKKELQELNELFK) are a coiled coil. The span at 64 to 74 (EAEKKLKKDDK) shows a compositional bias: basic and acidic residues. C3H1-type zinc fingers lie at residues 99-126 (DPKS…HDLT) and 174-212 (PKTQ…HALP). The stretch at 218–285 (KKDKKKEEKE…RRKADFKAGK (68 aa)) forms a coiled coil. A Phosphoserine modification is found at serine 231. The required for interaction with DRG1 stretch occupies residues 236 to 260 (IERERSALGPNVTKITLESFLAWKK). A disordered region spans residues 299–326 (PELVNDDDEEADDTRYTQGTGGDEVDDS). 3 positions are modified to phosphoserine: serine 351, serine 360, and serine 381. The disordered stretch occupies residues 358–411 (YTSDKDENKLSEASGGRAENGERSDLEEDNEREGTENGAIDAVPVDENLFTGED).

It belongs to the ZC3H15/TMA46 family. Interacts with DRG1; this interaction prevents DRG1 poly-ubiquitination and degradation by proteasome. DRG1-ZC3H15/DFRP1 complex co-sediments with polysomes. Associates with microtubules.

It is found in the cytoplasm. It localises to the nucleus. Protects DRG1 from proteolytic degradation. Stimulates DRG1 GTPase activity likely by increasing the affinity for the potassium ions. In Homo sapiens (Human), this protein is Zinc finger CCCH domain-containing protein 15 (ZC3H15).